The following is a 523-amino-acid chain: Nuclear receptor ROR-alpha (523 aa).

The span at 1–26 (MESAPAAPDPAASEPGSSGADAAAGS) shows a compositional bias: low complexity. The interval 1–63 (MESAPAAPDP…SRGISVTKKT (63 aa)) is disordered. N6-methyllysine is present on Lys-38. Residues 48 to 57 (QSYSSTSRGI) show a composition bias toward polar residues. NR C4-type zinc fingers lie at residues 73–93 (CKIC…CEGC) and 109–133 (CPRQ…LQKC). The segment at residues 73–138 (CKICGDKSSG…RLQKCLAVGM (66 aa)) is a DNA-binding region (nuclear receptor). The segment at 154–183 (DSLYAEVQKHRMQQQQRDHQQQPGEAEPLT) is disordered. Thr-183 is modified (phosphothreonine; by MAPK1). A Glycyl lysine isopeptide (Lys-Gly) (interchain with G-Cter in SUMO) cross-link involves residue Lys-240. Positions 272–510 (ELEHLAQNIS…LHFPPLYKEL (239 aa)) constitute an NR LBD domain. Positions 506 to 523 (LYKELFTSEFEPAMQIDG) match the AF-2 motif.

It belongs to the nuclear hormone receptor family. NR1 subfamily. As to quaternary structure, monomer. Interacts (via the DNA-binding domain) with HIF1A; the interaction enhances HIF1A transcription under hypoxia through increasing protein stability. Interacts with CEBPB; the interaction disrupts the interaction CEBPB:EP300. Interacts with the coactivators NCOA2, PPARGC1A (via LXXLL motif), EP300 and MED1. Interacts with the corepressor NCOR1. Interacts with MAGED1 and CTNNB1. Interacts with CRY1 and PER2. Interacts (via AF-2 motif) with PROX1. Interacts with NRIP1. Isoform 4 interacts (via AF-2 motif) with isoform 1 of FOXP3 (via LXXLL motif). In terms of processing, phosphorylation by conventional PKCs in neurons inhibits transcriptional activity. Phosphorylated on Thr-183 by MAPK1/ERK1 in vitro. Post-translationally, sumoylated by SENP1 and SENP2. Sumoylation, promoted by PIAS2, PIAS3, PIAS4 but not PIAS1, enhances the transcriptional activity. Desumoylated by SENP1. Ubiquitinated, leading to its degradation by the proteasome. Proteasomal degradation is required for efficient transcriptional activity and is prevented by HR. In terms of processing, monomethylated at Lys-38 by EZH2, this creates a degron recognized by a DCX (DDB1-DCAF1/VPRBP-CUL4A-RBX1) E3 ubiquitin ligase complex. In terms of tissue distribution, widely expressed in a number of tissues. Expressed in both regulatory T-cells (Treg) and effector T-cells (Teff). Isoform 4: Highly expressed in the central nervous system, including in the cerebellum.

It is found in the nucleus. Its function is as follows. Nuclear receptor that binds DNA as a monomer to ROR response elements (RORE) containing a single core motif half-site 5'-AGGTCA-3' preceded by a short A-T-rich sequence. Key regulator of embryonic development, cellular differentiation, immunity, circadian rhythm as well as lipid, steroid, xenobiotics and glucose metabolism. Considered to have intrinsic transcriptional activity, have some natural ligands like oxysterols that act as agonists (25-hydroxycholesterol) or inverse agonists (7-oxygenated sterols), enhancing or repressing the transcriptional activity, respectively. Recruits distinct combinations of cofactors to target genes regulatory regions to modulate their transcriptional expression, depending on the tissue, time and promoter contexts. Regulates genes involved in photoreceptor development including OPN1SW, OPN1SM and ARR3 and skeletal muscle development with MYOD1. Required for proper cerebellum development. Regulates SHH gene expression, among others, to induce granule cells proliferation as well as expression of genes involved in calcium-mediated signal transduction. Regulates the circadian expression of several clock genes, including CLOCK, BMAL1, NPAS2 and CRY1. Competes with NR1D1 for binding to their shared DNA response element on some clock genes such as BMAL1, CRY1 and NR1D1 itself, resulting in NR1D1-mediated repression or RORA-mediated activation of clock genes expression, leading to the circadian pattern of clock genes expression. Therefore influences the period length and stability of the clock. Regulates genes involved in lipid metabolism such as apolipoproteins APOA1, APOA5, APOC3 and PPARG. In liver, has specific and redundant functions with RORC as positive or negative modulator of expression of genes encoding phase I and phase II proteins involved in the metabolism of lipids, steroids and xenobiotics, such as CYP7B1 and SULT2A1. Induces a rhythmic expression of some of these genes. In addition, interplays functionally with NR1H2 and NR1H3 for the regulation of genes involved in cholesterol metabolism. Also involved in the regulation of hepatic glucose metabolism through the modulation of G6PC1 and PCK1. In adipose tissue, plays a role as negative regulator of adipocyte differentiation, probably acting through dual mechanisms. May suppress CEBPB-dependent adipogenesis through direct interaction and PPARG-dependent adipogenesis through competition for DNA-binding. Downstream of IL6 and TGFB and synergistically with RORC isoform 2, is implicated in the lineage specification of uncommitted CD4(+) T-helper (T(H)) cells into T(H)17 cells, antagonizing the T(H)1 program. Probably regulates IL17 and IL17F expression on T(H) by binding to the essential enhancer conserved non-coding sequence 2 (CNS2) in the IL17-IL17F locus. Involved in hypoxia signaling by interacting with and activating the transcriptional activity of HIF1A. May inhibit cell growth in response to cellular stress. May exert an anti-inflammatory role by inducing CHUK expression and inhibiting NF-kappa-B signaling. This chain is Nuclear receptor ROR-alpha (RORA), found in Homo sapiens (Human).